The primary structure comprises 66 residues: Putative alpha-neurotoxin RjAa44 (66 aa).

Residues 1 to 60 (KEGYPVDWGNCKYECMSDAYCKDLCADRKAKSGYCYKLNWSCYCEGLPDDSPIKTNGHCR) form the LCN-type CS-alpha/beta domain. 4 disulfides stabilise this stretch: cysteine 11/cysteine 59, cysteine 15/cysteine 35, cysteine 21/cysteine 42, and cysteine 25/cysteine 44.

Belongs to the long (4 C-C) scorpion toxin superfamily. Sodium channel inhibitor family. Alpha subfamily. Expressed by the venom gland.

Its subcellular location is the secreted. Alpha toxins bind voltage-independently at site-3 of sodium channels (Nav) and inhibit the inactivation of the activated channels, thereby blocking neuronal transmission. The chain is Putative alpha-neurotoxin RjAa44 from Rhopalurus junceus (Caribbean blue scorpion).